A 94-amino-acid chain; its full sequence is Ribonuclease P protein component 1 (94 aa).

The protein belongs to the eukaryotic/archaeal RNase P protein component 1 family. Consists of a catalytic RNA component and at least 4-5 protein subunits.

The protein localises to the cytoplasm. The catalysed reaction is Endonucleolytic cleavage of RNA, removing 5'-extranucleotides from tRNA precursor.. Its function is as follows. Part of ribonuclease P, a protein complex that generates mature tRNA molecules by cleaving their 5'-ends. This Haloarcula marismortui (strain ATCC 43049 / DSM 3752 / JCM 8966 / VKM B-1809) (Halobacterium marismortui) protein is Ribonuclease P protein component 1.